Reading from the N-terminus, the 339-residue chain is MAGKGTQTPPYWYDGSPVPWAMRLLAPLYAGVTALRRRAYRRGWRKHYTLPVPVIVVGNITAGGTGKTPLTIALVERLRAAGWKPGVASRGYGREDADKPLWVQADTPTAKGGDEPVLIAWKTGVPVRVDRDRVAAGKALIEAGCDVIVCDDGLQHYRLARDIEIEVVDAQRRYGNGRMIPAGPLREPVSRASECDFRVVNLGQADEESAAQACGFGQWPMALHIDSAQPLAGGRARPLAYFKGQRVHAVAGIAHPQRFFDMLRARGIGVVPHAFADHQAYQPQDLSFGSQLPVLMTEKDAVKCRAFGNDWYYAVPLRAELPAAFWVALTDRLDKLRPN.

Residue 61–68 participates in ATP binding; it reads TAGGTGKT.

This sequence belongs to the LpxK family.

It catalyses the reaction a lipid A disaccharide + ATP = a lipid IVA + ADP + H(+). It functions in the pathway glycolipid biosynthesis; lipid IV(A) biosynthesis; lipid IV(A) from (3R)-3-hydroxytetradecanoyl-[acyl-carrier-protein] and UDP-N-acetyl-alpha-D-glucosamine: step 6/6. Its function is as follows. Transfers the gamma-phosphate of ATP to the 4'-position of a tetraacyldisaccharide 1-phosphate intermediate (termed DS-1-P) to form tetraacyldisaccharide 1,4'-bis-phosphate (lipid IVA). The sequence is that of Tetraacyldisaccharide 4'-kinase from Stenotrophomonas maltophilia (strain R551-3).